The following is a 1134-amino-acid chain: RNA-binding protein NAB6 (1134 aa).

Position 2 is an N-acetylserine (Ser2). 3 disordered regions span residues 112 to 133, 151 to 173, and 464 to 491; these read RPVS…NTNN, RNNN…RNNS, and SVPS…SGIT. Composition is skewed to low complexity over residues 115–133 and 151–164; these read SNHN…NTNN and RNNN…HNNN. Residues Ser464 and Ser467 each carry the phosphoserine modification. Residues 471-489 are compositionally biased toward low complexity; sequence GNNNDSNNNGNNNKSNMSG. One can recognise an RRM domain in the interval 653–726; it reads RTIYIGNINP…NMLRVGWGHY (74 aa). Disordered regions lie at residues 918–959 and 1043–1092; these read LDAH…FGGL and NYRS…GSFA. A compositionally biased stretch (polar residues) spans 1057–1081; sequence STLSYNHSKNNETPMQDIFTNGETA. Residues 1083–1092 are compositionally biased toward basic residues; sequence NRKKKRGSFA.

It is found in the cytoplasm. In terms of biological role, RNA-binding protein that associates with mRNAs encoding cell wall proteins. The chain is RNA-binding protein NAB6 (NAB6) from Saccharomyces cerevisiae (strain ATCC 204508 / S288c) (Baker's yeast).